Here is a 443-residue protein sequence, read N- to C-terminus: UDP-N-acetylmuramate--L-alanine ligase (443 aa).

Position 110–116 (110–116 (GAHGKTS)) interacts with ATP.

Belongs to the MurCDEF family.

The protein resides in the cytoplasm. The enzyme catalyses UDP-N-acetyl-alpha-D-muramate + L-alanine + ATP = UDP-N-acetyl-alpha-D-muramoyl-L-alanine + ADP + phosphate + H(+). Its pathway is cell wall biogenesis; peptidoglycan biosynthesis. Its function is as follows. Cell wall formation. The chain is UDP-N-acetylmuramate--L-alanine ligase from Lactococcus lactis subsp. cremoris (strain SK11).